Here is a 351-residue protein sequence, read N- to C-terminus: MPGSAAKGSELSERIESFVETLKRGGGPRSSEEMARETLGLLRQIITDHRWSNAGELMELIRREGRRMTAAQPSETTVGNMVRRVLKIIREEYGRLHGRSDESDQQESLHKLLTSGGLNEDFSFHYAQLQSNIIEAINELLVELEGTMENIAAQALEHIHSNEVIMTIGFSRTVEAFLKEAARKRKFHVIVAECAPFCQGHEMAVNLSKAGIETTVMTDAAIFAVMSRVNKVIIGTKTILANGALRAVTGTHTLALAAKHHSTPLIVCAPMFKLSPQFPNEEDSFHKFVAPEEVLPFTEGDILEKVSVHCPVFDYVPPELITLFISNIGGNAPSYIYRLMSELYHPDDHVL.

The protein belongs to the eIF-2B alpha/beta/delta subunits family. As to quaternary structure, component of the translation initiation factor 2B (eIF2B) complex which is a heterodecamer of two sets of five different subunits: alpha, beta, gamma, delta and epsilon. Subunits alpha, beta and delta comprise a regulatory subcomplex and subunits epsilon and gamma comprise a catalytic subcomplex. Within the complex, the hexameric regulatory complex resides at the center, with the two heterodimeric catalytic subcomplexes bound on opposite sides.

Its subcellular location is the cytoplasm. The protein localises to the cytosol. Activated by the chemical integrated stress response (ISR) inhibitor ISRIB which stimulates guanine nucleotide exchange factor activity for both phosphorylated and unphosphorylated eIF2. Acts as a component of the translation initiation factor 2B (eIF2B) complex, which catalyzes the exchange of GDP for GTP on eukaryotic initiation factor 2 (eIF2) gamma subunit. Its guanine nucleotide exchange factor activity is repressed when bound to eIF2 complex phosphorylated on the alpha subunit, thereby limiting the amount of methionyl-initiator methionine tRNA available to the ribosome and consequently global translation is repressed. In Homo sapiens (Human), this protein is Translation initiation factor eIF2B subunit beta (EIF2B2).